The primary structure comprises 744 residues: Tripartite motif-containing protein 2 (744 aa).

Serine 10 is subject to Phosphoserine. An RING-type zinc finger spans residues 23–64 (CSICLERYKNPKVLPCLHTFCERCLQNYIPAHSLTLSCPVCR). The B box-type zinc-finger motif lies at 113-154 (GKPLSCPNHDGNVMEFYCQSCETAMCRECTEGEHAEHPTVPL). Residues cysteine 118, histidine 121, cysteine 141, and histidine 146 each coordinate Zn(2+). One copy of the Filamin repeat lies at 320–421 (TTNAVASETV…IRGSPFKLKV (102 aa)). Phosphothreonine is present on threonine 371. 3 positions are modified to phosphoserine: serine 375, serine 424, and serine 428. Residues 432-462 (EGVKRRVKSPGSGHVKQKAVKRPASMYSTGK) are disordered. NHL repeat units lie at residues 473-516 (IFRV…FSND), 520-563 (KSRF…FSND), 564-605 (GKFK…FQPN), 609-652 (VTRF…FNQE), 656-699 (MLKF…FDGS), and 700-743 (GSFL…YRYL).

It belongs to the TRIM/RBCC family. As to quaternary structure, forms homooligomers. Interacts with TRIM3; this interaction reduces TRIM2 activity. Interacts with myosin V; myosin V may not be a substrate for ubiquitination. Interacts with NEFL. Interacts with phosphorylated BCL2L11. Interacts with SIRPA. In terms of processing, RING-type zinc finger-dependent and UBE2D1-dependent autoubiquitination. Highly expressed in the cerebellum, hippocampus, retina and spinal cord. In the cerebellum, strongest expression in Purkinje cells and in the deep cerebellar nuclei. In retina, high expression in the ganglionic cell layer, inner nuclear layer and inthe outer plexiform layer. Particularly high expression in the hippocampus, in pyramidal cells of CA1-CA3 hippocampal areas and ingranule cells of the dentate gyrus.

Its subcellular location is the cytoplasm. It carries out the reaction S-ubiquitinyl-[E2 ubiquitin-conjugating enzyme]-L-cysteine + [acceptor protein]-L-lysine = [E2 ubiquitin-conjugating enzyme]-L-cysteine + N(6)-ubiquitinyl-[acceptor protein]-L-lysine.. It functions in the pathway protein modification; protein ubiquitination. In terms of biological role, UBE2D1-dependent E3 ubiquitin-protein ligase that mediates the ubiquitination of NEFL and of phosphorylated BCL2L11. Plays a neuroprotective function. May play a role in neuronal rapid ischemic tolerance. Plays a role in antiviral immunity and limits new world arenavirus infection independently of its ubiquitin ligase activity by decreasing virus internalization. The chain is Tripartite motif-containing protein 2 (Trim2) from Mus musculus (Mouse).